The following is a 293-amino-acid chain: Undecaprenyl-diphosphatase (293 aa).

7 helical membrane passes run Pro57–Phe77, Leu106–Trp126, Ile134–Ala154, Gly172–Ser192, Phe212–Ala232, Val239–Trp259, and Ser268–Leu288.

It belongs to the UppP family.

The protein localises to the cell inner membrane. The catalysed reaction is di-trans,octa-cis-undecaprenyl diphosphate + H2O = di-trans,octa-cis-undecaprenyl phosphate + phosphate + H(+). In terms of biological role, catalyzes the dephosphorylation of undecaprenyl diphosphate (UPP). Confers resistance to bacitracin. In Prochlorococcus marinus (strain MIT 9303), this protein is Undecaprenyl-diphosphatase.